We begin with the raw amino-acid sequence, 329 residues long: Tagatose 1,6-diphosphate aldolase 2 (329 aa).

The protein belongs to the aldolase LacD family.

The catalysed reaction is D-tagatofuranose 1,6-bisphosphate = D-glyceraldehyde 3-phosphate + dihydroxyacetone phosphate. Its pathway is carbohydrate metabolism; D-tagatose 6-phosphate degradation; D-glyceraldehyde 3-phosphate and glycerone phosphate from D-tagatose 6-phosphate: step 2/2. The sequence is that of Tagatose 1,6-diphosphate aldolase 2 (lacD2) from Streptococcus mutans serotype c (strain ATCC 700610 / UA159).